The following is a 373-amino-acid chain: Plasmepsin VIII (373 aa).

An N-terminal signal peptide occupies residues 1–21 (MNKFFVFPLLLILNSIVLVKS). Residues 50–370 (FIGEISIGNP…EKDNMRIGLA (321 aa)) enclose the Peptidase A1 domain. Active-site residues include Asp-68 and Asp-258.

It belongs to the peptidase A1 family.

Its function is as follows. During the development in the mosquito vector, plays an essential role in sporozoite egress from the oocyst and sporozoite gliding motility, which is required for the invasion of salivary glands and subsequent transmission to the host. This Plasmodium berghei (strain Anka) protein is Plasmepsin VIII.